A 132-amino-acid chain; its full sequence is Small ribosomal subunit protein uS8 (132 aa).

This sequence belongs to the universal ribosomal protein uS8 family. In terms of assembly, part of the 30S ribosomal subunit. Contacts proteins S5 and S12.

In terms of biological role, one of the primary rRNA binding proteins, it binds directly to 16S rRNA central domain where it helps coordinate assembly of the platform of the 30S subunit. This chain is Small ribosomal subunit protein uS8, found in Bacillus anthracis (strain A0248).